A 564-amino-acid polypeptide reads, in one-letter code: Eukaryotic translation initiation factor 3 subunit L (564 aa).

Ser-2 carries the post-translational modification N-acetylserine. In terms of domain architecture, PCI spans 331–537; the sequence is DAIRVFANIL…IHIADTKVAR (207 aa). Lys-465 and Lys-549 each carry N6-acetyllysine.

It belongs to the eIF-3 subunit L family. Component of the eukaryotic translation initiation factor 3 (eIF-3) complex, which is composed of 13 subunits: EIF3A, EIF3B, EIF3C, EIF3D, EIF3E, EIF3F, EIF3G, EIF3H, EIF3I, EIF3J, EIF3K, EIF3L and EIF3M. The eIF-3 complex appears to include 3 stable modules: module A is composed of EIF3A, EIF3B, EIF3G and EIF3I; module B is composed of EIF3F, EIF3H, and EIF3M; and module C is composed of EIF3C, EIF3D, EIF3E, EIF3K and EIF3L. EIF3C of module C binds EIF3B of module A and EIF3H of module B, thereby linking the three modules. EIF3J is a labile subunit that binds to the eIF-3 complex via EIF3B. The eIF-3 complex interacts with RPS6KB1 under conditions of nutrient depletion. Mitogenic stimulation leads to binding and activation of a complex composed of MTOR and RPTOR, leading to phosphorylation and release of RPS6KB1 and binding of EIF4B to eIF-3. Interacts with RRN3.

It localises to the cytoplasm. In terms of biological role, component of the eukaryotic translation initiation factor 3 (eIF-3) complex, which is required for several steps in the initiation of protein synthesis. The eIF-3 complex associates with the 40S ribosome and facilitates the recruitment of eIF-1, eIF-1A, eIF-2:GTP:methionyl-tRNAi and eIF-5 to form the 43S pre-initiation complex (43S PIC). The eIF-3 complex stimulates mRNA recruitment to the 43S PIC and scanning of the mRNA for AUG recognition. The eIF-3 complex is also required for disassembly and recycling of post-termination ribosomal complexes and subsequently prevents premature joining of the 40S and 60S ribosomal subunits prior to initiation. The eIF-3 complex specifically targets and initiates translation of a subset of mRNAs involved in cell proliferation, including cell cycling, differentiation and apoptosis, and uses different modes of RNA stem-loop binding to exert either translational activation or repression. In Bos taurus (Bovine), this protein is Eukaryotic translation initiation factor 3 subunit L.